The primary structure comprises 766 residues: MVKLDDKNKKFKGKKKVKNVLEKKAKGLKLNKVDRKRIVKIEEKAALKSKVDKAVKDELERLKKSSSTSVFDNDGTRDSLCSESSFGSQPAPKKKSKKVLFSGELEHVKVFDKRVQDLQIKPSEASPGRGILRSPLDKKVKKLAKVKTVKVAQEEEEEHSAPPKKKVKVNAEKAVASEPADDENLESVDEQAGGDESHIDIPTLKRKRVAIQVTKSVKEQLLNMPRKERKAFLKELKLKRKPEGARAQKCKELWEKIRMGKTPKAEKDTAVHELYGLVKGHAAKLIYAHDTSRVIECLVATEREGIINNLFNELTPEIVRMSKNVYSKFFVKKMLKNGTKEQRDIIINAFRGHAPTLLRIKHAAEVLEYAYNDFANAHQRYNIITEFYGKEFILFREDNIRSLTEILAEKPEKKVVILKHLDEVIGAVNEKETLRLSILHKLMLDFFDNCDEEKKINLLDSLKDKIPEFIHTPDGAKLAIKLIWFAPVKERKLIVKNFKDLSVKAAMEHYGHRVLLALFDTVDDTVLLNKVIVSELANEMKKLIEDDWGEKVIHYLVHPRDGRGIDKREITFLAEGDSNPHSKKTQKDRYGQLYAGITENLYPYLAANFEELVFEANKSKFVAACLETTSSFDLFDRQVPAEARKSCNQAIVELAKKDFVPMDQEGFHIIEHQSGNFILMAVMRCDAALQEDERLSVALAEGLTSKQLGSWVTCNRGCHVLLKMLQVGGPKVIEKLKASISRKHLDGYNSKGANLLKAQLDGNVKK.

Disordered stretches follow at residues 63–98 and 152–197; these read KKSSSTSVFDNDGTRDSLCSESSFGSQPAPKKKSKK and AQEE…GDES. Positions 79-88 are enriched in polar residues; the sequence is SLCSESSFGS. Over residues 179-193 the composition is skewed to acidic residues; sequence PADDENLESVDEQAG. In terms of domain architecture, PUM-HD spans 245-602; that stretch reads ARAQKCKELW…LYAGITENLY (358 aa). Pumilio repeat units lie at residues 313–348, 461–496, 497–534, and 535–571; these read ELTPEIVRMSKNVYSKFFVKKMLKNGTKEQRDIIIN, SLKDKIPEFIHTPDGAKLAIKLIWFAPVKERKLIVK, NFKDLSVKAAMEHYGHRVLLALFDTVDDTVLLNKVIVS, and ELANEMKKLIEDDWGEKVIHYLVHPRDGRGIDKREIT.

In Caenorhabditis elegans, this protein is Pumilio domain-containing protein 12 (puf-12).